The primary structure comprises 314 residues: Mitochondrial 2-oxoglutarate/malate carrier protein (314 aa).

Ala-2 bears the N-acetylalanine mark. The residue at position 6 (Ser-6) is a Phosphoserine. Solcar repeat units follow at residues 23-108 (VKFL…LFER), 117-208 (PGFL…SKQF), and 217-306 (DNIL…MNKA). Residues 24 to 42 (KFLFGGLAGMGATVFVQPL) form a helical membrane-spanning segment. An N6-succinyllysine modification is found at Lys-57. Position 73 is an N6-acetyllysine (Lys-73). A helical membrane pass occupies residues 83 to 101 (GLSAGLLRQATYTTTRLGI). Tyr-102 is subject to Phosphotyrosine. 3 helical membrane-spanning segments follow: residues 119–140 (FLLK…GTPA), 183–202 (GCIP…LASY), and 222–240 (HFCA…SMPV). Lys-256 carries the post-translational modification N6-acetyllysine. A helical transmembrane segment spans residues 281 to 300 (GFTPYYARLGPHTVLTFIFL).

It belongs to the mitochondrial carrier (TC 2.A.29) family. Interacts with SMIM26. Most highly expressed in the heart.

The protein resides in the mitochondrion inner membrane. The enzyme catalyses (S)-malate(in) + 2-oxoglutarate(out) = (S)-malate(out) + 2-oxoglutarate(in). It carries out the reaction malonate(in) + 2-oxoglutarate(out) = malonate(out) + 2-oxoglutarate(in). It catalyses the reaction succinate(in) + 2-oxoglutarate(out) = succinate(out) + 2-oxoglutarate(in). The catalysed reaction is maleate(in) + 2-oxoglutarate(out) = maleate(out) + 2-oxoglutarate(in). The enzyme catalyses oxaloacetate(in) + 2-oxoglutarate(out) = oxaloacetate(out) + 2-oxoglutarate(in). Functionally, catalyzes the transport of 2-oxoglutarate (alpha-oxoglutarate) across the inner mitochondrial membrane in an electroneutral exchange for malate. Can also exchange 2-oxoglutarate for other dicarboxylic acids such as malonate, succinate, maleate and oxaloacetate, although with lower affinity. Contributes to several metabolic processes, including the malate-aspartate shuttle, the oxoglutarate/isocitrate shuttle, in gluconeogenesis from lactate, and in nitrogen metabolism. Maintains mitochondrial fusion and fission events, and the organization and morphology of cristae. Involved in the regulation of apoptosis. Helps protect from cytotoxic-induced apoptosis by modulating glutathione levels in mitochondria. The chain is Mitochondrial 2-oxoglutarate/malate carrier protein (SLC25A11) from Homo sapiens (Human).